A 156-amino-acid chain; its full sequence is Ribosomal RNA large subunit methyltransferase H (156 aa).

S-adenosyl-L-methionine-binding positions include Leu-73, Gly-104, and 123–128; that span reads LSSLTL.

It belongs to the RNA methyltransferase RlmH family. In terms of assembly, homodimer.

Its subcellular location is the cytoplasm. It carries out the reaction pseudouridine(1915) in 23S rRNA + S-adenosyl-L-methionine = N(3)-methylpseudouridine(1915) in 23S rRNA + S-adenosyl-L-homocysteine + H(+). Its function is as follows. Specifically methylates the pseudouridine at position 1915 (m3Psi1915) in 23S rRNA. This Ralstonia nicotianae (strain ATCC BAA-1114 / GMI1000) (Ralstonia solanacearum) protein is Ribosomal RNA large subunit methyltransferase H.